A 1097-amino-acid polypeptide reads, in one-letter code: UPF0746 protein DDB_G0281095 (1097 aa).

Residues 1-11 (MVNNNKRKEIE) are compositionally biased toward basic and acidic residues. The disordered stretch occupies residues 1–24 (MVNNNKRKEIENQENDNDDDNDGL). Residues 12 to 22 (NQENDNDDDND) are compositionally biased toward acidic residues. In terms of domain architecture, SAP spans 35 to 69 (YDSIRSKELQTIAKSLGLPNNGKKQEVYKRIEGYF). Residues 329–521 (FKEIREIHQQ…QLILELNEIQ (193 aa)) are a coiled coil.

This sequence belongs to the UPF0746 family.

This Dictyostelium discoideum (Social amoeba) protein is UPF0746 protein DDB_G0281095.